The chain runs to 162 residues: L-amino acid N-acetyltransferase AaaT (162 aa).

The N-acetyltransferase domain maps to 4–162; the sequence is IVIRHAETRD…VDAYYMARVK (159 aa).

This sequence belongs to the acetyltransferase family.

The catalysed reaction is L-phenylalanine + acetyl-CoA = N-acetyl-L-phenylalanine + CoA + H(+). It catalyses the reaction L-methionine + acetyl-CoA = N-acetyl-L-methionine + CoA + H(+). Functionally, catalyzes the N-acetylation of L-phenylalanine and L-methionine using acetyl-CoA as acetyl donor in vitro. Cannot accept L-tyrosine as substrate and propionyl-CoA, succinyl-CoA or (S)-methylmalonyl-CoA as acyl donors. Is also able to acetylate and thus detoxify several nonhydrolyzable aminoacyl adenylates, but not the processed form of the peptide-nucleotide antibiotic microcin C (McC). When overproduced, provides complete resistance to leucyl sulfamoyl adenylate (LSA) and partial resistance to alanyl sulfamoyl adenylate (ASA) and phenylalanyl sulfamoyl adenylate (FSA). Therefore, may protect bacteria from various toxic aminoacyl nucleotides, either exogenous or those generated inside the cell during normal metabolism. The protein is L-amino acid N-acetyltransferase AaaT of Escherichia coli (strain K12).